The primary structure comprises 354 residues: D-alanine--D-alanine ligase (354 aa).

Residues 132 to 342 (KMVFERAGLP…FPSLVDRLLQ (211 aa)) form the ATP-grasp domain. 168–223 (EAQVGYPCFVKPANLGSSVGIAKVRNRSELEAALDNAASYDRRIIVEAGLTDIREV) contacts ATP. Asp295, Glu309, and Asn311 together coordinate Mg(2+).

This sequence belongs to the D-alanine--D-alanine ligase family. It depends on Mg(2+) as a cofactor. Mn(2+) serves as cofactor.

It is found in the cytoplasm. It carries out the reaction 2 D-alanine + ATP = D-alanyl-D-alanine + ADP + phosphate + H(+). Its pathway is cell wall biogenesis; peptidoglycan biosynthesis. Cell wall formation. In Synechocystis sp. (strain ATCC 27184 / PCC 6803 / Kazusa), this protein is D-alanine--D-alanine ligase.